A 436-amino-acid polypeptide reads, in one-letter code: Ribulose bisphosphate carboxylase large chain (436 aa).

Substrate-binding residues include N104 and T154. The Proton acceptor role is filled by K156. K158 serves as a coordination point for substrate. Residues K182, D184, and E185 each contribute to the Mg(2+) site. K182 is subject to N6-carboxylysine. H275 functions as the Proton acceptor in the catalytic mechanism. 3 residues coordinate substrate: R276, H308, and S360.

This sequence belongs to the RuBisCO large chain family. Type I subfamily. In terms of assembly, heterohexadecamer of 8 large chains and 8 small chains. Mg(2+) serves as cofactor.

It localises to the plastid. Its subcellular location is the chloroplast. The catalysed reaction is 2 (2R)-3-phosphoglycerate + 2 H(+) = D-ribulose 1,5-bisphosphate + CO2 + H2O. The enzyme catalyses D-ribulose 1,5-bisphosphate + O2 = 2-phosphoglycolate + (2R)-3-phosphoglycerate + 2 H(+). Functionally, ruBisCO catalyzes two reactions: the carboxylation of D-ribulose 1,5-bisphosphate, the primary event in carbon dioxide fixation, as well as the oxidative fragmentation of the pentose substrate in the photorespiration process. Both reactions occur simultaneously and in competition at the same active site. This is Ribulose bisphosphate carboxylase large chain from Euglena stellata.